The chain runs to 388 residues: Processive diacylglycerol beta-glucosyltransferase (388 aa).

This sequence belongs to the glycosyltransferase 28 family. UgtP subfamily.

It is found in the cell membrane. The enzyme catalyses a 1,2-diacyl-3-O-(beta-D-glucopyranosyl)-sn-glycerol + UDP-alpha-D-glucose = a 1,2-diacyl-3-O-(beta-D-Glc-(1-&gt;6)-beta-D-Glc)-sn-glycerol + UDP + H(+). It carries out the reaction a 1,2-diacyl-3-O-(beta-D-Glc-(1-&gt;6)-beta-D-Glc)-sn-glycerol + UDP-alpha-D-glucose = a 1,2-diacyl-3-O-(beta-D-Glc-(1-&gt;6)-beta-D-Glc-(1-&gt;6)-beta-D-Glc)-sn-glycerol + UDP + H(+). The catalysed reaction is a 1,2-diacyl-sn-glycerol + UDP-alpha-D-glucose = a 1,2-diacyl-3-O-(beta-D-glucopyranosyl)-sn-glycerol + UDP + H(+). The protein operates within glycolipid metabolism; diglucosyl-diacylglycerol biosynthesis. Functionally, processive glucosyltransferase involved in the biosynthesis of both the bilayer- and non-bilayer-forming membrane glucolipids. Is able to successively transfer up to three glucosyl residues to diacylglycerol (DAG), thereby catalyzing the formation of beta-monoglucosyl-DAG (3-O-(beta-D-glucopyranosyl)-1,2-diacyl-sn-glycerol), beta-diglucosyl-DAG (3-O-(beta-D-glucopyranosyl-beta-(1-&gt;6)-D-glucopyranosyl)-1,2-diacyl-sn-glycerol) and beta-triglucosyl-DAG (3-O-(beta-D-glucopyranosyl-beta-(1-&gt;6)-D-glucopyranosyl-beta-(1-&gt;6)-D-glucopyranosyl)-1,2-diacyl-sn-glycerol). Beta-diglucosyl-DAG is the predominant glycolipid found in Bacillales and is also used as a membrane anchor for lipoteichoic acid (LTA). This chain is Processive diacylglycerol beta-glucosyltransferase, found in Bacillus cereus (strain 03BB102).